The sequence spans 223 residues: Nicotinamide/nicotinic acid mononucleotide adenylyltransferase 2 (223 aa).

NAD(+) is bound by residues Ser-11 and Phe-12. His-19 lines the ATP pocket. Residues Trp-87, Thr-90, Gly-116, Asp-118, Leu-133, Trp-134, and Arg-153 each contribute to the NAD(+) site. An ATP-binding site is contributed by 190 to 191 (TR).

The protein belongs to the eukaryotic NMN adenylyltransferase family. The cofactor is a divalent metal cation.

The catalysed reaction is beta-nicotinamide D-ribonucleotide + ATP + H(+) = diphosphate + NAD(+). It carries out the reaction nicotinate beta-D-ribonucleotide + ATP + H(+) = deamido-NAD(+) + diphosphate. It functions in the pathway cofactor biosynthesis; NAD(+) biosynthesis; deamido-NAD(+) from nicotinate D-ribonucleotide: step 1/1. Its pathway is cofactor biosynthesis; NAD(+) biosynthesis; NAD(+) from nicotinamide D-ribonucleotide: step 1/1. In terms of biological role, catalyzes the formation of NAD(+) from nicotinamide mononucleotide (NMN) and ATP. Can also use the deamidated form; nicotinic acid mononucleotide (NaMN) as substrate. The sequence is that of Nicotinamide/nicotinic acid mononucleotide adenylyltransferase 2 from Caenorhabditis elegans.